Here is a 91-residue protein sequence, read N- to C-terminus: M-myrmeciitoxin-Mb3a (91 aa).

Residues 1-21 form the signal peptide; that stretch reads MKLSCLSLALAIILILAIVHS. Residues 22–54 constitute a propeptide that is removed on maturation; sequence PNMEVKALADPEADAFGEANAFGEADAFAEANA.

Homodimer; disulfide-linked. In terms of tissue distribution, expressed by the venom gland and reservoir.

It localises to the secreted. In terms of biological role, causes a significant and dose-dependent histamine release, probably by influencing the signal transduction of mast cells through a non-IgE-mediated pathway. This peptide does not have cytotoxic activities. This Myrmecia banksi (Jack jumper ant) protein is M-myrmeciitoxin-Mb3a.